The chain runs to 435 residues: GTPase Der (435 aa).

EngA-type G domains lie at 4-167 (PTLA…PSED) and 175-350 (IKFS…ENQT). GTP contacts are provided by residues 10–17 (GRPNVGKS), 57–61 (DTGGI), 119–122 (NKVD), 181–188 (GRPNVGKS), 228–232 (DTAGI), and 293–296 (NKWD). Residues 351-435 (RRIQSSVLND…PIHIIARKRK (85 aa)) form the KH-like domain.

Belongs to the TRAFAC class TrmE-Era-EngA-EngB-Septin-like GTPase superfamily. EngA (Der) GTPase family. Associates with the 50S ribosomal subunit.

GTPase that plays an essential role in the late steps of ribosome biogenesis. The chain is GTPase Der from Lacticaseibacillus casei (strain BL23) (Lactobacillus casei).